Consider the following 81-residue polypeptide: Photosystem I iron-sulfur center (81 aa).

4Fe-4S ferredoxin-type domains follow at residues 2 to 31 (SHTV…MVPW) and 39 to 68 (IASA…VRVY). Positions 11, 14, 17, 21, 48, 51, 54, and 58 each coordinate [4Fe-4S] cluster.

In terms of assembly, the eukaryotic PSI reaction center is composed of at least 11 subunits. [4Fe-4S] cluster serves as cofactor.

It localises to the plastid. The protein resides in the chloroplast thylakoid membrane. It catalyses the reaction reduced [plastocyanin] + hnu + oxidized [2Fe-2S]-[ferredoxin] = oxidized [plastocyanin] + reduced [2Fe-2S]-[ferredoxin]. Functionally, apoprotein for the two 4Fe-4S centers FA and FB of photosystem I (PSI); essential for photochemical activity. FB is the terminal electron acceptor of PSI, donating electrons to ferredoxin. The C-terminus interacts with PsaA/B/D and helps assemble the protein into the PSI complex. Required for binding of PsaD and PsaE to PSI. PSI is a plastocyanin/cytochrome c6-ferredoxin oxidoreductase, converting photonic excitation into a charge separation, which transfers an electron from the donor P700 chlorophyll pair to the spectroscopically characterized acceptors A0, A1, FX, FA and FB in turn. The sequence is that of Photosystem I iron-sulfur center from Chlorella vulgaris (Green alga).